The primary structure comprises 368 residues: 3-dehydroquinate synthase (368 aa).

NAD(+)-binding positions include 76–81 (DGEQYK), 110–114 (GVIGD), 134–135 (TT), lysine 147, lysine 156, and 174–177 (CLKT). Zn(2+) is bound by residues glutamate 189, histidine 252, and histidine 269.

Belongs to the sugar phosphate cyclases superfamily. Dehydroquinate synthase family. The cofactor is NAD(+). Co(2+) serves as cofactor. Requires Zn(2+) as cofactor.

It is found in the cytoplasm. It carries out the reaction 7-phospho-2-dehydro-3-deoxy-D-arabino-heptonate = 3-dehydroquinate + phosphate. It participates in metabolic intermediate biosynthesis; chorismate biosynthesis; chorismate from D-erythrose 4-phosphate and phosphoenolpyruvate: step 2/7. Catalyzes the conversion of 3-deoxy-D-arabino-heptulosonate 7-phosphate (DAHP) to dehydroquinate (DHQ). The sequence is that of 3-dehydroquinate synthase from Vibrio vulnificus (strain YJ016).